A 73-amino-acid polypeptide reads, in one-letter code: Translation initiation factor IF-1 3 (73 aa).

Residues 1–72 (MAKEELVEFG…TKGRINYRHK (72 aa)) enclose the S1-like domain.

The protein belongs to the IF-1 family. As to quaternary structure, component of the 30S ribosomal translation pre-initiation complex which assembles on the 30S ribosome in the order IF-2 and IF-3, IF-1 and N-formylmethionyl-tRNA(fMet); mRNA recruitment can occur at any time during PIC assembly.

Its subcellular location is the cytoplasm. Its function is as follows. One of the essential components for the initiation of protein synthesis. Stabilizes the binding of IF-2 and IF-3 on the 30S subunit to which N-formylmethionyl-tRNA(fMet) subsequently binds. Helps modulate mRNA selection, yielding the 30S pre-initiation complex (PIC). Upon addition of the 50S ribosomal subunit IF-1, IF-2 and IF-3 are released leaving the mature 70S translation initiation complex. The sequence is that of Translation initiation factor IF-1 3 from Cupriavidus metallidurans (strain ATCC 43123 / DSM 2839 / NBRC 102507 / CH34) (Ralstonia metallidurans).